The following is a 576-amino-acid chain: Probable proline--tRNA ligase, mitochondrial (576 aa).

It belongs to the class-II aminoacyl-tRNA synthetase family.

It localises to the mitochondrion. It carries out the reaction tRNA(Pro) + L-proline + ATP = L-prolyl-tRNA(Pro) + AMP + diphosphate. The polypeptide is Probable proline--tRNA ligase, mitochondrial (AIM10) (Saccharomyces cerevisiae (strain ATCC 204508 / S288c) (Baker's yeast)).